Consider the following 228-residue polypeptide: MPRRGLVAGPDLDNFQRRYFTPSEVAEHNQLEDLWVSYLGFVYNLTPLVEEFKGDLLLKPILEVAGQDISHWFDPQTRDIRKHIDPLTGCMRYRTPRGRFVHIPPPLPRSDWANDFGVPWWKGANYQVGRLSARTRNIRIINTLATQEHTLQVGAQESMWEILHRYLPYNAHAASYTWKYDGKNLNMDQTLEENGIRDEEEEFDYLNMDGKLHTPAILLYFNDDLTEL.

The 67-residue stretch at 17-83 (RRYFTPSEVA…DPQTRDIRKH (67 aa)) folds into the Cytochrome b5 heme-binding domain. Residue His83 coordinates heme.

It belongs to the cytochrome b5 family.

Its subcellular location is the cytoplasm. The protein localises to the cytoskeleton. The protein resides in the cilium axoneme. Functionally, radial spoke stalk protein that binds heme under oxidizing conditions. Required for the coordinated beating of multiple cilia maybe by functioning in a redox signaling pathway. In Mus musculus (Mouse), this protein is Cytochrome b5 domain-containing protein 1 (Cyb5d1).